The chain runs to 196 residues: Urease accessory protein UreE (196 aa).

The disordered stretch occupies residues 150–196 (RGAYSGGHDHGHAHAHSHAEAHSHAHGESHSHSHSHSHDDHHHHDHD). A compositionally biased stretch (basic and acidic residues) spans 156–196 (GHDHGHAHAHSHAEAHSHAHGESHSHSHSHSHDDHHHHDHD).

This sequence belongs to the UreE family.

The protein resides in the cytoplasm. In terms of biological role, involved in urease metallocenter assembly. Binds nickel. Probably functions as a nickel donor during metallocenter assembly. In Mesorhizobium japonicum (strain LMG 29417 / CECT 9101 / MAFF 303099) (Mesorhizobium loti (strain MAFF 303099)), this protein is Urease accessory protein UreE.